A 285-amino-acid polypeptide reads, in one-letter code: Bifunctional protein FolD (285 aa).

Residues 166–168 (GRS), Ser-191, and Thr-232 each bind NADP(+).

The protein belongs to the tetrahydrofolate dehydrogenase/cyclohydrolase family. Homodimer.

It catalyses the reaction (6R)-5,10-methylene-5,6,7,8-tetrahydrofolate + NADP(+) = (6R)-5,10-methenyltetrahydrofolate + NADPH. It carries out the reaction (6R)-5,10-methenyltetrahydrofolate + H2O = (6R)-10-formyltetrahydrofolate + H(+). The protein operates within one-carbon metabolism; tetrahydrofolate interconversion. Catalyzes the oxidation of 5,10-methylenetetrahydrofolate to 5,10-methenyltetrahydrofolate and then the hydrolysis of 5,10-methenyltetrahydrofolate to 10-formyltetrahydrofolate. This Chloroflexus aurantiacus (strain ATCC 29366 / DSM 635 / J-10-fl) protein is Bifunctional protein FolD.